The sequence spans 286 residues: 4-diphosphocytidyl-2-C-methyl-D-erythritol kinase (286 aa).

Residue K11 is part of the active site. 93 to 103 provides a ligand contact to ATP; sequence PFGAGLGGGSS. D135 is a catalytic residue.

It belongs to the GHMP kinase family. IspE subfamily.

The enzyme catalyses 4-CDP-2-C-methyl-D-erythritol + ATP = 4-CDP-2-C-methyl-D-erythritol 2-phosphate + ADP + H(+). Its pathway is isoprenoid biosynthesis; isopentenyl diphosphate biosynthesis via DXP pathway; isopentenyl diphosphate from 1-deoxy-D-xylulose 5-phosphate: step 3/6. Functionally, catalyzes the phosphorylation of the position 2 hydroxy group of 4-diphosphocytidyl-2C-methyl-D-erythritol. This is 4-diphosphocytidyl-2-C-methyl-D-erythritol kinase from Prosthecochloris aestuarii (strain DSM 271 / SK 413).